The primary structure comprises 204 residues: Holliday junction branch migration complex subunit RuvA (204 aa).

A domain I region spans residues 1–64 (MIGRVTGILV…EDAHLLFGFS (64 aa)). Residues 65 to 143 (HKQDRSLFRE…GLQQTDFFIK (79 aa)) form a domain II region. The interval 144-155 (SSHLPGIKCSKL) is flexible linker. The tract at residues 156-204 (DQSLQLDEAVSALIALGYKPIEAEKMVKKVLKADLTSEQLIREALKAAL) is domain III.

This sequence belongs to the RuvA family. In terms of assembly, homotetramer. Forms an RuvA(8)-RuvB(12)-Holliday junction (HJ) complex. HJ DNA is sandwiched between 2 RuvA tetramers; dsDNA enters through RuvA and exits via RuvB. An RuvB hexamer assembles on each DNA strand where it exits the tetramer. Each RuvB hexamer is contacted by two RuvA subunits (via domain III) on 2 adjacent RuvB subunits; this complex drives branch migration. In the full resolvosome a probable DNA-RuvA(4)-RuvB(12)-RuvC(2) complex forms which resolves the HJ.

Its subcellular location is the cytoplasm. Its function is as follows. The RuvA-RuvB-RuvC complex processes Holliday junction (HJ) DNA during genetic recombination and DNA repair, while the RuvA-RuvB complex plays an important role in the rescue of blocked DNA replication forks via replication fork reversal (RFR). RuvA specifically binds to HJ cruciform DNA, conferring on it an open structure. The RuvB hexamer acts as an ATP-dependent pump, pulling dsDNA into and through the RuvAB complex. HJ branch migration allows RuvC to scan DNA until it finds its consensus sequence, where it cleaves and resolves the cruciform DNA. The protein is Holliday junction branch migration complex subunit RuvA of Histophilus somni (strain 2336) (Haemophilus somnus).